The following is a 637-amino-acid chain: Biosynthetic arginine decarboxylase (637 aa).

Lysine 101 carries the N6-(pyridoxal phosphate)lysine modification. Residue phenylalanine 286 to tyrosine 296 participates in substrate binding.

It belongs to the Orn/Lys/Arg decarboxylase class-II family. SpeA subfamily. Mg(2+) is required as a cofactor. Requires pyridoxal 5'-phosphate as cofactor.

The enzyme catalyses L-arginine + H(+) = agmatine + CO2. The protein operates within amine and polyamine biosynthesis; agmatine biosynthesis; agmatine from L-arginine: step 1/1. Functionally, catalyzes the biosynthesis of agmatine from arginine. The protein is Biosynthetic arginine decarboxylase of Shewanella putrefaciens (strain CN-32 / ATCC BAA-453).